Reading from the N-terminus, the 293-residue chain is 1D-myo-inositol 2-acetamido-2-deoxy-alpha-D-glucopyranoside deacetylase 2 (293 aa).

Zn(2+) contacts are provided by His-6, Asp-9, and His-142.

Belongs to the MshB deacetylase family. The cofactor is Zn(2+).

It catalyses the reaction 1D-myo-inositol 2-acetamido-2-deoxy-alpha-D-glucopyranoside + H2O = 1D-myo-inositol 2-amino-2-deoxy-alpha-D-glucopyranoside + acetate. In terms of biological role, catalyzes the deacetylation of 1D-myo-inositol 2-acetamido-2-deoxy-alpha-D-glucopyranoside (GlcNAc-Ins) in the mycothiol biosynthesis pathway. The chain is 1D-myo-inositol 2-acetamido-2-deoxy-alpha-D-glucopyranoside deacetylase 2 from Frankia alni (strain DSM 45986 / CECT 9034 / ACN14a).